The following is a 749-amino-acid chain: Phosphate-regulating neutral endopeptidase PHEX (749 aa).

Over 1 to 20 (MEAETGSTMETGKGTNRGIR) the chain is Cytoplasmic. A helical; Signal-anchor for type II membrane protein membrane pass occupies residues 21–37 (IALALFIGGTLVLGTLL). Topologically, residues 38–749 (FLVSQGLLSF…NRGADSCRLW (712 aa)) are extracellular. The Peptidase M13 domain occupies 53-749 (YCLKPECIEA…NRGADSCRLW (697 aa)). The cysteines at positions 54 and 59 are disulfide-linked. N-linked (GlcNAc...) asparagine glycosylation is found at N71, N238, N263, N290, N301, N377, and N484. Intrachain disulfides connect C77/C733, C85/C693, C142/C406, and C617/C746. Zn(2+) is bound at residue H580. Residue E581 is part of the active site. Residues H584 and E642 each coordinate Zn(2+). Residue D646 is the Proton donor of the active site. N-linked (GlcNAc...) asparagine glycosylation is present at N736.

The protein belongs to the peptidase M13 family. In terms of assembly, interacts with MEPE; the interaction is zinc-dependent (via ASARM motif). It depends on Zn(2+) as a cofactor. In terms of processing, N-glycosylated. In terms of tissue distribution, expressed in bone, specifically in the osteoid and in osteocytes. Expressed in teeth, specifically in odontoblasts and ameloblasts. Expressed moderately by macrophages in the liver and has minimal expression in brown adipose tissue. Also expressed in suprabasal layers of the skin.

The protein resides in the cell membrane. Peptidase that cleaves SIBLING (small integrin-binding ligand, N-linked glycoprotein)-derived ASARM peptides, thus regulating their biological activity. Cleaves ASARM peptides between Ser and Glu or Asp residues. Regulates osteogenic cell differentiation and bone mineralization through the cleavage of the MEPE-derived ASARM peptide. Promotes dentin mineralization and renal phosphate reabsorption by cleaving DMP1- and MEPE-derived ASARM peptides. Inhibits the cleavage of MEPE by CTSB/cathepsin B thus preventing MEPE degradation. This chain is Phosphate-regulating neutral endopeptidase PHEX (Phex), found in Mus musculus (Mouse).